The following is a 284-amino-acid chain: 4-hydroxybenzoate octaprenyltransferase (284 aa).

A run of 9 helical transmembrane segments spans residues 19-39 (IPIL…SHGL), 42-62 (ISYL…GCII), 85-105 (GQLS…VAFI), 107-127 (VLFL…LAIL), 134-154 (FFAI…FMAF), 165-185 (AWIF…IYAL), 211-231 (ILLF…YCDF), 233-253 (SFFY…YFLY), and 261-281 (CINA…IAVI).

This sequence belongs to the UbiA prenyltransferase family. The cofactor is Mg(2+).

The protein localises to the cell inner membrane. The enzyme catalyses all-trans-octaprenyl diphosphate + 4-hydroxybenzoate = 4-hydroxy-3-(all-trans-octaprenyl)benzoate + diphosphate. It functions in the pathway cofactor biosynthesis; ubiquinone biosynthesis. Catalyzes the prenylation of para-hydroxybenzoate (PHB) with an all-trans polyprenyl group. Mediates the second step in the final reaction sequence of ubiquinone-8 (UQ-8) biosynthesis, which is the condensation of the polyisoprenoid side chain with PHB, generating the first membrane-bound Q intermediate 3-octaprenyl-4-hydroxybenzoate. The protein is 4-hydroxybenzoate octaprenyltransferase of Francisella tularensis subsp. holarctica (strain LVS).